The following is a 476-amino-acid chain: Siroheme synthase (476 aa).

The segment at 1-204 is precorrin-2 dehydrogenase /sirohydrochlorin ferrochelatase; sequence MDYFPVFLNI…GKDQAAQDYL (204 aa). Residues 22–23 and 43–44 contribute to the NAD(+) site; these read SV and PT. The residue at position 129 (S129) is a Phosphoserine. The tract at residues 218–476 is uroporphyrinogen-III C-methyltransferase; it reads GEVYLVGAGP…GNTPGYSKHP (259 aa). P227 is an S-adenosyl-L-methionine binding site. The active-site Proton acceptor is D250. K272 functions as the Proton donor in the catalytic mechanism. S-adenosyl-L-methionine is bound by residues 303-305, I308, 333-334, M385, and G414; these read GGD and TA.

This sequence in the N-terminal section; belongs to the precorrin-2 dehydrogenase / sirohydrochlorin ferrochelatase family. In the C-terminal section; belongs to the precorrin methyltransferase family.

The enzyme catalyses uroporphyrinogen III + 2 S-adenosyl-L-methionine = precorrin-2 + 2 S-adenosyl-L-homocysteine + H(+). It carries out the reaction precorrin-2 + NAD(+) = sirohydrochlorin + NADH + 2 H(+). It catalyses the reaction siroheme + 2 H(+) = sirohydrochlorin + Fe(2+). Its pathway is cofactor biosynthesis; adenosylcobalamin biosynthesis; precorrin-2 from uroporphyrinogen III: step 1/1. It participates in cofactor biosynthesis; adenosylcobalamin biosynthesis; sirohydrochlorin from precorrin-2: step 1/1. The protein operates within porphyrin-containing compound metabolism; siroheme biosynthesis; precorrin-2 from uroporphyrinogen III: step 1/1. It functions in the pathway porphyrin-containing compound metabolism; siroheme biosynthesis; siroheme from sirohydrochlorin: step 1/1. Its pathway is porphyrin-containing compound metabolism; siroheme biosynthesis; sirohydrochlorin from precorrin-2: step 1/1. In terms of biological role, multifunctional enzyme that catalyzes the SAM-dependent methylations of uroporphyrinogen III at position C-2 and C-7 to form precorrin-2 via precorrin-1. Then it catalyzes the NAD-dependent ring dehydrogenation of precorrin-2 to yield sirohydrochlorin. Finally, it catalyzes the ferrochelation of sirohydrochlorin to yield siroheme. This chain is Siroheme synthase, found in Nitrosomonas eutropha (strain DSM 101675 / C91 / Nm57).